We begin with the raw amino-acid sequence, 134 residues long: Putative F-box protein R638 (134 aa).

An F-box domain is found at 5–52 (NIMNLLNEDCILHILSFLADKDKIQLSLSCKSNLKFLHKTIYDDIYFY).

The chain is Putative F-box protein R638 from Acanthamoeba polyphaga mimivirus (APMV).